The chain runs to 402 residues: Argininosuccinate synthase (402 aa).

ATP contacts are provided by residues 10–18 and A38; that span reads AYSGGVDTS. Y89 contributes to the L-citrulline binding site. ATP is bound at residue G119. L-aspartate-binding residues include T121, N125, and D126. N125 provides a ligand contact to L-citrulline. Positions 129, 177, 186, 262, and 274 each coordinate L-citrulline.

The protein belongs to the argininosuccinate synthase family. Type 1 subfamily. Homotetramer.

It is found in the cytoplasm. The catalysed reaction is L-citrulline + L-aspartate + ATP = 2-(N(omega)-L-arginino)succinate + AMP + diphosphate + H(+). It participates in amino-acid biosynthesis; L-arginine biosynthesis; L-arginine from L-ornithine and carbamoyl phosphate: step 2/3. In Prochlorococcus marinus (strain SARG / CCMP1375 / SS120), this protein is Argininosuccinate synthase.